A 571-amino-acid polypeptide reads, in one-letter code: Urease subunit alpha (571 aa).

The Urease domain maps to 133-571 (GGIDTHVHFI…LPLTQRYFLF (439 aa)). Ni(2+)-binding residues include H138, H140, and K221. K221 carries the post-translational modification N6-carboxylysine. H223 contacts substrate. Ni(2+) contacts are provided by H250 and H276. The Proton donor role is filled by H324. D364 is a Ni(2+) binding site.

The protein belongs to the metallo-dependent hydrolases superfamily. Urease alpha subunit family. In terms of assembly, heterotrimer of UreA (gamma), UreB (beta) and UreC (alpha) subunits. Three heterotrimers associate to form the active enzyme. It depends on Ni cation as a cofactor. Carboxylation allows a single lysine to coordinate two nickel ions.

The protein localises to the cytoplasm. The enzyme catalyses urea + 2 H2O + H(+) = hydrogencarbonate + 2 NH4(+). The protein operates within nitrogen metabolism; urea degradation; CO(2) and NH(3) from urea (urease route): step 1/1. This chain is Urease subunit alpha, found in Staphylococcus epidermidis (strain ATCC 35984 / DSM 28319 / BCRC 17069 / CCUG 31568 / BM 3577 / RP62A).